The chain runs to 482 residues: BEL1-like homeodomain protein 7 (482 aa).

Residues 118-134 are SR/KY domain; the sequence is SKYLKAAQELLDETVNV. The segment at 167–238 is BELL domain; that stretch reads ERQELQSKLS…CLRDAISGQI (72 aa). Residues 285-347 constitute a DNA-binding region (homeobox); it reads TWRPQRGLPD…NARVRLWKPM (63 aa). The tract at residues 358–401 is disordered; it reads DALQENDPNQSSENTPEITEIQELQTESSSNNGHVPGVASSSMR. Positions 363 to 401 are enriched in polar residues; sequence NDPNQSSENTPEITEIQELQTESSSNNGHVPGVASSSMR.

It belongs to the TALE/BELL homeobox family. In terms of assembly, may form heterodimeric complexes with TALE/KNOX proteins.

The protein localises to the nucleus. This is BEL1-like homeodomain protein 7 (BLH7) from Arabidopsis thaliana (Mouse-ear cress).